Consider the following 547-residue polypeptide: Chaperonin GroEL (547 aa).

Residues 30–33, Lys51, 87–91, Gly415, and Asp496 each bind ATP; these read TLGP and DGTTT. Residues 528–547 form a disordered region; it reads KEEPMPMRGSGMGGMGGMDF. Positions 537–547 are enriched in gly residues; it reads SGMGGMGGMDF.

The protein belongs to the chaperonin (HSP60) family. As to quaternary structure, forms a cylinder of 14 subunits composed of two heptameric rings stacked back-to-back. Interacts with the co-chaperonin GroES.

It localises to the cytoplasm. The catalysed reaction is ATP + H2O + a folded polypeptide = ADP + phosphate + an unfolded polypeptide.. Its function is as follows. Together with its co-chaperonin GroES, plays an essential role in assisting protein folding. The GroEL-GroES system forms a nano-cage that allows encapsulation of the non-native substrate proteins and provides a physical environment optimized to promote and accelerate protein folding. The sequence is that of Chaperonin GroEL from Rickettsia canadensis (strain McKiel).